Reading from the N-terminus, the 650-residue chain is Acetyl-coenzyme A synthetase (650 aa).

Residues 191–194 (RGGR), T311, and N335 contribute to the CoA site. ATP is bound by residues 387–389 (GEP), 411–416 (DTWWQT), D500, and R515. S523 serves as a coordination point for CoA. R526 contributes to the ATP binding site. Mg(2+)-binding residues include V537, H539, and V542. R584 is a binding site for CoA. K609 bears the N6-acetyllysine mark.

This sequence belongs to the ATP-dependent AMP-binding enzyme family. It depends on Mg(2+) as a cofactor. Post-translationally, acetylated. Deacetylation by the SIR2-homolog deacetylase activates the enzyme.

The enzyme catalyses acetate + ATP + CoA = acetyl-CoA + AMP + diphosphate. Functionally, catalyzes the conversion of acetate into acetyl-CoA (AcCoA), an essential intermediate at the junction of anabolic and catabolic pathways. AcsA undergoes a two-step reaction. In the first half reaction, AcsA combines acetate with ATP to form acetyl-adenylate (AcAMP) intermediate. In the second half reaction, it can then transfer the acetyl group from AcAMP to the sulfhydryl group of CoA, forming the product AcCoA. This chain is Acetyl-coenzyme A synthetase, found in Shewanella amazonensis (strain ATCC BAA-1098 / SB2B).